The sequence spans 103 residues: MKFKTGDKVRVMRGKDAGKEGQITKVLKDADKVVVEGINMIKKHQKPNNANPQGGIIDKEAPIHVSNVMLLDPDTNKPTRIGSEVKDGNKVRIAKKSGTAIDK.

It belongs to the universal ribosomal protein uL24 family. In terms of assembly, part of the 50S ribosomal subunit.

Its function is as follows. One of two assembly initiator proteins, it binds directly to the 5'-end of the 23S rRNA, where it nucleates assembly of the 50S subunit. In terms of biological role, one of the proteins that surrounds the polypeptide exit tunnel on the outside of the subunit. This Lacticaseibacillus casei (strain BL23) (Lactobacillus casei) protein is Large ribosomal subunit protein uL24.